Here is a 282-residue protein sequence, read N- to C-terminus: MKKRFLSICTMTIAALATTTMVNTSYAKTDTESHNHSSLGTENKNVLDINSSSHNIKPSQNKSYPSVILPNNNRHQIFNTTQGHYDAVSFIYIPIDGGYMSGSGVVVGENEILTNKHVVNGAKGNPRNISVHPSAKNENDYPNGKFVGQEIIPYPGNSDLAILRVSPNEHNQHIGQVVKPATISSNTDTRINENITVTGYPGDKPLATMWESVGKVVYIGGEELRYDLSTVGGNSGSPVFNGKNQVIGIHYGGVDNKYNSSVYINDFVQQFLRNNIPDINIQ.

The first 27 residues, 1 to 27, serve as a signal peptide directing secretion; it reads MKKRFLSICTMTIAALATTTMVNTSYA. Residues 28–66 constitute a propeptide that is removed on maturation; that stretch reads KTDTESHNHSSLGTENKNVLDINSSSHNIKPSQNKSYPS. Residues His117, Asp159, and Ser235 each act as charge relay system in the active site.

It belongs to the peptidase S1B family. In terms of assembly, monomer.

Its subcellular location is the secreted. It catalyses the reaction Preferential cleavage: Glu-|-Xaa, Asp-|-Xaa.. Its activity is regulated as follows. Inhibited by diisopropyl fluorophosphate. Exhibits a significant hydrolytic activity for the carbonyl side of glutamic acid. Shows activity toward human fibronectin and type 1 collagen. The sequence is that of Glutamyl endopeptidase (gseA) from Staphylococcus epidermidis.